Consider the following 488-residue polypeptide: ATP-dependent RNA helicase dbp3 (488 aa).

Residues 1–29 are compositionally biased toward basic and acidic residues; sequence MAKREHQDQTGDSRPSKKSKGTKDTKKNT. Residues 1–42 form a disordered region; the sequence is MAKREHQDQTGDSRPSKKSKGTKDTKKNTEVSPPYFQSPALD. Residues 92–100 carry the Q motif motif; that stretch reads GFASPTAIQ. The Helicase ATP-binding domain maps to 104-279; the sequence is WPLLFAGRDV…STFMTSPVTV (176 aa). 117-124 provides a ligand contact to ATP; that stretch reads AETGSGKT. The DEAD box motif lies at 226 to 229; the sequence is DEAD. A Helicase C-terminal domain is found at 306 to 457; the sequence is EKEQRLVQIL…EVPEALLKFG (152 aa).

This sequence belongs to the DEAD box helicase family. DDX5/DBP2 subfamily.

It localises to the nucleus. The protein localises to the nucleolus. It catalyses the reaction ATP + H2O = ADP + phosphate + H(+). In terms of biological role, ATP-dependent RNA helicase required for 60S ribosomal subunit synthesis. Involved in efficient pre-rRNA processing, predominantly at site A3, which is necessary for the normal formation of 25S and 5.8S rRNAs. This Emericella nidulans (strain FGSC A4 / ATCC 38163 / CBS 112.46 / NRRL 194 / M139) (Aspergillus nidulans) protein is ATP-dependent RNA helicase dbp3 (dbp3).